The sequence spans 60 residues: MGVKKEKGRKRFRKRKTFGNQILPLELLIEKNKREIINSAELMEEIYMKIDEKHTQCVTK.

The segment at residues 11 to 31 is a DNA-binding region (H-T-H motif); it reads RFRKRKTFGNQILPLELLIEK.

The protein to B.subtilis SenS.

Functionally, regulates the expression of extracellular-protein genes of Bacillus natto. In Bacillus subtilis subsp. natto, this protein is Transcriptional regulatory protein SenN (senN).